A 157-amino-acid polypeptide reads, in one-letter code: Lipoprotein signal peptidase (157 aa).

4 consecutive transmembrane segments (helical) span residues 10 to 30 (LVFM…KYAI), 38 to 58 (SLMV…LLSF), 59 to 79 (LEGG…IFLI), and 84 to 104 (LFKT…SNVL). Residues Asp114 and Asp131 contribute to the active site. Residues 122 to 142 (FDFAIFNFADVMIDVGVGVLL) form a helical membrane-spanning segment.

The protein belongs to the peptidase A8 family.

The protein resides in the cell inner membrane. It catalyses the reaction Release of signal peptides from bacterial membrane prolipoproteins. Hydrolyzes -Xaa-Yaa-Zaa-|-(S,diacylglyceryl)Cys-, in which Xaa is hydrophobic (preferably Leu), and Yaa (Ala or Ser) and Zaa (Gly or Ala) have small, neutral side chains.. Its pathway is protein modification; lipoprotein biosynthesis (signal peptide cleavage). In terms of biological role, this protein specifically catalyzes the removal of signal peptides from prolipoproteins. The chain is Lipoprotein signal peptidase from Helicobacter pylori (strain HPAG1).